We begin with the raw amino-acid sequence, 110 residues long: U-scoloptoxin(16)-Er7a (110 aa).

A signal peptide spans 1–26; it reads MTSTRKLSVSCLIVFMVSSLIAVSSG.

It belongs to the scoloptoxin-16 family. In terms of processing, contains 4 disulfide bonds. Expressed by the venom gland.

The protein resides in the secreted. The chain is U-scoloptoxin(16)-Er7a from Ethmostigmus rubripes (Giant centipede).